We begin with the raw amino-acid sequence, 1457 residues long: Ras guanine nucleotide exchange factor C (1457 aa).

One copy of the RCC1 1 repeat lies at 1–55 (MSVFTFGHGSNGALGLGKITDDTCPTPQKVNYFTEIDKRVKKVACGSYHTVFVTD). Disordered stretches follow at residues 75–196 (FYTS…PLLN), 209–264 (HYES…RINK), 282–313 (EQQQ…DEDP), and 376–404 (QQQL…SLQT). 2 stretches are compositionally biased toward low complexity: residues 83 to 121 (TTTT…KIVN) and 134 to 158 (SNTT…LPPT). Composition is skewed to basic and acidic residues over residues 171–188 (IKLD…ELIQ) and 209–224 (HYES…KDNE). Residues 225–237 (NENEEDEDDDDDD) show a composition bias toward acidic residues. The segment covering 238-249 (STIRQNEDKESS) has biased composition (basic and acidic residues). Low complexity-rich tracts occupy residues 283-292 (QQQQPQQPQQ) and 376-403 (QQQL…SSLQ). RCC1 repeat units lie at residues 351–401 (GGNV…SSSS), 432–483 (WGEL…CYTE), 485–549 (GKMY…VLTQ), and 590–647 (SGEV…ALVE). Positions 650-971 (PKTKLALQLV…QVLLERMNQN (322 aa)) constitute a DH domain. The segment covering 703–715 (LPPSLKGLSGGLP) has biased composition (low complexity). Residues 703-762 (LPPSLKGLSGGLPDNANNTIKNGKDKDNHHNGDSNGHHSNGHYHGNGNNGNNSITTSNSI) are disordered. Over residues 724 to 738 (NGKDKDNHHNGDSNG) the composition is skewed to basic and acidic residues. The segment covering 739-762 (HHSNGHYHGNGNNGNNSITTSNSI) has biased composition (low complexity). Residues 989–1109 (GNPQIMGGSL…SVSQIKLQYF (121 aa)) form the N-terminal Ras-GEF domain. Residues 1127–1210 (LTQNEITTPP…NNNNNNNNLT (84 aa)) are disordered. Residues 1138–1211 (LQIQNNNQNN…NNNNNNNLTN (74 aa)) adopt a coiled-coil conformation. A compositionally biased stretch (low complexity) spans 1142–1210 (NNNQNNNLEN…NNNNNNNNLT (69 aa)). Residues 1232-1454 (QPIEVAQTLT…DDKQAQKISS (223 aa)) form the Ras-GEF domain.

Functionally, promotes the exchange of Ras-bound GDP by GTP. The chain is Ras guanine nucleotide exchange factor C (gefC) from Dictyostelium discoideum (Social amoeba).